Reading from the N-terminus, the 226-residue chain is 2-C-methyl-D-erythritol 4-phosphate cytidylyltransferase (226 aa).

Belongs to the IspD/TarI cytidylyltransferase family. IspD subfamily.

The enzyme catalyses 2-C-methyl-D-erythritol 4-phosphate + CTP + H(+) = 4-CDP-2-C-methyl-D-erythritol + diphosphate. It participates in isoprenoid biosynthesis; isopentenyl diphosphate biosynthesis via DXP pathway; isopentenyl diphosphate from 1-deoxy-D-xylulose 5-phosphate: step 2/6. Functionally, catalyzes the formation of 4-diphosphocytidyl-2-C-methyl-D-erythritol from CTP and 2-C-methyl-D-erythritol 4-phosphate (MEP). The protein is 2-C-methyl-D-erythritol 4-phosphate cytidylyltransferase of Microcystis aeruginosa (strain NIES-843 / IAM M-2473).